Here is a 346-residue protein sequence, read N- to C-terminus: Dihydroorotase (346 aa).

His14 and His16 together coordinate Zn(2+). Substrate is bound by residues 16–18 and Asn42; that span reads HLR. Zn(2+) is bound by residues Lys100, His137, and His175. Lys100 is subject to N6-carboxylysine. His137 provides a ligand contact to substrate. Position 220 (Leu220) interacts with substrate. Asp248 provides a ligand contact to Zn(2+). Asp248 is an active-site residue. Substrate-binding residues include His252 and Ala264.

It belongs to the metallo-dependent hydrolases superfamily. DHOase family. Class II DHOase subfamily. Homodimer. Zn(2+) is required as a cofactor.

It catalyses the reaction (S)-dihydroorotate + H2O = N-carbamoyl-L-aspartate + H(+). Its pathway is pyrimidine metabolism; UMP biosynthesis via de novo pathway; (S)-dihydroorotate from bicarbonate: step 3/3. Functionally, catalyzes the reversible cyclization of carbamoyl aspartate to dihydroorotate. This Ruegeria pomeroyi (strain ATCC 700808 / DSM 15171 / DSS-3) (Silicibacter pomeroyi) protein is Dihydroorotase.